The following is a 319-amino-acid chain: Protoheme IX farnesyltransferase (319 aa).

9 helical membrane passes run 34–54, 55–75, 95–115, 119–139, 155–175, 182–202, 221–241, 244–264, and 291–311; these read VMSLVVFTAFAGLVLAPGHIN, PVLGLIAILCIAVGAGASGAL, IPAGRVAPSEALAFGLVLSGF, ILGLAVNWLSAAILAFTIFFY, IVIGGAAGAFPPVIGWACVTG, VVLFLIIFLWTPAHFWALALF, VPTTKNQIVAYAVLTAIIGVV, FMGFASLGYGVVATVLGVIFV, and IFYLFAIFSALLIDRLVAVLM.

Belongs to the UbiA prenyltransferase family. Protoheme IX farnesyltransferase subfamily.

It localises to the cell inner membrane. The enzyme catalyses heme b + (2E,6E)-farnesyl diphosphate + H2O = Fe(II)-heme o + diphosphate. It functions in the pathway porphyrin-containing compound metabolism; heme O biosynthesis; heme O from protoheme: step 1/1. Converts heme B (protoheme IX) to heme O by substitution of the vinyl group on carbon 2 of heme B porphyrin ring with a hydroxyethyl farnesyl side group. In Rhizobium rhizogenes (strain K84 / ATCC BAA-868) (Agrobacterium radiobacter), this protein is Protoheme IX farnesyltransferase.